Consider the following 2094-residue polypeptide: Protein Ycf2 (2094 aa).

ATP is bound at residue 1385-1392; the sequence is GPPETGRS.

Belongs to the Ycf2 family.

It is found in the plastid. Its subcellular location is the chloroplast stroma. Probable ATPase of unknown function. Its presence in a non-photosynthetic plant (Epifagus virginiana) and experiments in tobacco indicate that it has an essential function which is probably not related to photosynthesis. The chain is Protein Ycf2 from Huperzia lucidula (Shining clubmoss).